A 254-amino-acid chain; its full sequence is Hydroxyacylglutathione hydrolase (254 aa).

Residues His54, His56, Asp58, His59, His111, Asp130, and His168 each contribute to the Zn(2+) site.

It belongs to the metallo-beta-lactamase superfamily. Glyoxalase II family. Monomer. Zn(2+) is required as a cofactor.

It carries out the reaction an S-(2-hydroxyacyl)glutathione + H2O = a 2-hydroxy carboxylate + glutathione + H(+). Its pathway is secondary metabolite metabolism; methylglyoxal degradation; (R)-lactate from methylglyoxal: step 2/2. Its function is as follows. Thiolesterase that catalyzes the hydrolysis of S-D-lactoyl-glutathione to form glutathione and D-lactic acid. The protein is Hydroxyacylglutathione hydrolase of Legionella pneumophila (strain Corby).